A 298-amino-acid chain; its full sequence is tRNA pseudouridine synthase B (298 aa).

Residue Asp46 is the Nucleophile of the active site.

Belongs to the pseudouridine synthase TruB family. Type 1 subfamily.

The catalysed reaction is uridine(55) in tRNA = pseudouridine(55) in tRNA. Its function is as follows. Responsible for synthesis of pseudouridine from uracil-55 in the psi GC loop of transfer RNAs. The polypeptide is tRNA pseudouridine synthase B (Paracoccus denitrificans (strain Pd 1222)).